The following is a 368-amino-acid chain: Phosphoserine aminotransferase (368 aa).

R44 is an L-glutamate binding site. Residues 78–79 (AT), W104, T157, D179, and Q202 each bind pyridoxal 5'-phosphate. K203 carries the N6-(pyridoxal phosphate)lysine modification. Residue 244–245 (NT) coordinates pyridoxal 5'-phosphate.

Belongs to the class-V pyridoxal-phosphate-dependent aminotransferase family. SerC subfamily. In terms of assembly, homodimer. Pyridoxal 5'-phosphate serves as cofactor.

The protein localises to the cytoplasm. It catalyses the reaction O-phospho-L-serine + 2-oxoglutarate = 3-phosphooxypyruvate + L-glutamate. It carries out the reaction 4-(phosphooxy)-L-threonine + 2-oxoglutarate = (R)-3-hydroxy-2-oxo-4-phosphooxybutanoate + L-glutamate. It functions in the pathway amino-acid biosynthesis; L-serine biosynthesis; L-serine from 3-phospho-D-glycerate: step 2/3. It participates in cofactor biosynthesis; pyridoxine 5'-phosphate biosynthesis; pyridoxine 5'-phosphate from D-erythrose 4-phosphate: step 3/5. Functionally, catalyzes the reversible conversion of 3-phosphohydroxypyruvate to phosphoserine and of 3-hydroxy-2-oxo-4-phosphonooxybutanoate to phosphohydroxythreonine. The chain is Phosphoserine aminotransferase from Neisseria gonorrhoeae (strain ATCC 700825 / FA 1090).